A 95-amino-acid chain; its full sequence is Small ribosomal subunit protein bS6 (95 aa).

It belongs to the bacterial ribosomal protein bS6 family.

Binds together with bS18 to 16S ribosomal RNA. The sequence is that of Small ribosomal subunit protein bS6 from Caldanaerobacter subterraneus subsp. tengcongensis (strain DSM 15242 / JCM 11007 / NBRC 100824 / MB4) (Thermoanaerobacter tengcongensis).